The following is a 346-amino-acid chain: UPF0065 protein in the TAR-I ttuE-ttuC' intergenic region (346 aa).

The first 46 residues, 1–46 (MQASMLDSQWRLTIFSPRRKVKVSQMNSRFIAVLLTATILPWVAQA), serve as a signal peptide directing secretion.

This sequence belongs to the UPF0065 (bug) family.

The protein localises to the periplasm. This is UPF0065 protein in the TAR-I ttuE-ttuC' intergenic region from Agrobacterium vitis (Rhizobium vitis).